A 251-amino-acid chain; its full sequence is MTVYFIGAGPGAADLITVRGQRLLQRCPVCLYAGSIMPDDLLAQCPPGATIVDTGPLTLEQIVRKLADADADGRDVARLHSGDPSLYSALAEQCRELDALGIGYEIVPGVPAFAAAAAALKRELTVPGVAQTVTLTRVATLSTPIPPGEDLAALARSRATLVLHLAAAQIDAIVPRLLDGGYRPETPVAVVAFASWPQQRTLRGTLADIAARMHDAKITRTAVIVVGDVLTAEGFTDSYLYSVARHGRYAQ.

The protein belongs to the precorrin methyltransferase family.

The catalysed reaction is precorrin-4 + S-adenosyl-L-methionine = precorrin-5 + S-adenosyl-L-homocysteine. It participates in cofactor biosynthesis; adenosylcobalamin biosynthesis; cob(II)yrinate a,c-diamide from precorrin-2 (aerobic route): step 4/10. Its function is as follows. Catalyzes the methylation of C-11 in precorrin-4 to form precorrin-5. The protein is Precorrin-4 C(11)-methyltransferase (cobM) of Mycobacterium tuberculosis (strain CDC 1551 / Oshkosh).